We begin with the raw amino-acid sequence, 185 residues long: MKVIVINSTPINPIVIGRIKGAYGILGWVKILSFTEKIEDIFVYNPWFIFFRSKWKVIKLEYWRLMNNKNYIVKFFNVSDRNHAMALSQHNLVVESIQFPKLYNKDEYYWKDIIGCKIMTINGKCLGRVISIIDTKAHDILVVRSEEYGFTKYVDCLIPFILKKIIKDVDLIKNIVVVDWEIYKF.

The PRC barrel domain occupies 105–184 (KDEYYWKDII…IVVVDWEIYK (80 aa)).

Belongs to the RimM family. As to quaternary structure, binds ribosomal protein uS19.

The protein localises to the cytoplasm. Its function is as follows. An accessory protein needed during the final step in the assembly of 30S ribosomal subunit, possibly for assembly of the head region. Essential for efficient processing of 16S rRNA. May be needed both before and after RbfA during the maturation of 16S rRNA. It has affinity for free ribosomal 30S subunits but not for 70S ribosomes. The chain is Ribosome maturation factor RimM from Blochmanniella floridana.